The sequence spans 540 residues: T-complex protein 1 subunit alpha (540 aa).

It belongs to the TCP-1 chaperonin family. Component of the T-complex protein 1 (TCP1) complex.

It is found in the cytoplasm. Its function is as follows. Molecular chaperone; assists the folding of proteins upon ATP hydrolysis. The chain is T-complex protein 1 subunit alpha (TCP1) from Encephalitozoon cuniculi (strain GB-M1) (Microsporidian parasite).